The chain runs to 126 residues: Holo-[acyl-carrier-protein] synthase (126 aa).

2 residues coordinate Mg(2+): D9 and E58.

The protein belongs to the P-Pant transferase superfamily. AcpS family. Requires Mg(2+) as cofactor.

It is found in the cytoplasm. It carries out the reaction apo-[ACP] + CoA = holo-[ACP] + adenosine 3',5'-bisphosphate + H(+). Transfers the 4'-phosphopantetheine moiety from coenzyme A to a Ser of acyl-carrier-protein. In Escherichia fergusonii (strain ATCC 35469 / DSM 13698 / CCUG 18766 / IAM 14443 / JCM 21226 / LMG 7866 / NBRC 102419 / NCTC 12128 / CDC 0568-73), this protein is Holo-[acyl-carrier-protein] synthase.